A 211-amino-acid polypeptide reads, in one-letter code: Probable endo-1,4-beta-xylanase 5 (211 aa).

The signal sequence occupies residues 1–16 (MKVTAAFASLLLTAFA). The region spanning 19-210 (APEPVLVSRS…GAGSASVTIS (192 aa)) is the GH11 domain. The active-site Nucleophile is the Glu-106. Residue Glu-197 is the Proton donor of the active site.

Belongs to the glycosyl hydrolase 11 (cellulase G) family.

It is found in the secreted. The catalysed reaction is Endohydrolysis of (1-&gt;4)-beta-D-xylosidic linkages in xylans.. It participates in glycan degradation; xylan degradation. In terms of biological role, endo-1,4-beta-xylanase involved in the hydrolysis of xylan, a major structural heterogeneous polysaccharide found in plant biomass representing the second most abundant polysaccharide in the biosphere, after cellulose. The protein is Probable endo-1,4-beta-xylanase 5 (XYN5) of Aspergillus niger (strain ATCC MYA-4892 / CBS 513.88 / FGSC A1513).